The sequence spans 199 residues: Pyrrolidone-carboxylate peptidase (199 aa).

Active-site residues include Glu80, Cys142, and His166.

Belongs to the peptidase C15 family. As to quaternary structure, homotetramer.

The protein localises to the cytoplasm. It carries out the reaction Release of an N-terminal pyroglutamyl group from a polypeptide, the second amino acid generally not being Pro.. In terms of biological role, removes 5-oxoproline from various penultimate amino acid residues except L-proline. The chain is Pyrrolidone-carboxylate peptidase from Oceanobacillus iheyensis (strain DSM 14371 / CIP 107618 / JCM 11309 / KCTC 3954 / HTE831).